A 410-amino-acid polypeptide reads, in one-letter code: Multifunctional CCA protein (410 aa).

ATP contacts are provided by G8 and R11. Positions 8 and 11 each coordinate CTP. Mg(2+) contacts are provided by E21 and D23. ATP contacts are provided by R91, R137, and R140. CTP is bound by residues R91, R137, and R140. Residues 228-329 (TLLHQFLCLK…WKLFKSLDIL (102 aa)) form the HD domain.

It belongs to the tRNA nucleotidyltransferase/poly(A) polymerase family. Bacterial CCA-adding enzyme type 1 subfamily. In terms of assembly, monomer. Can also form homodimers and oligomers. Mg(2+) is required as a cofactor. It depends on Ni(2+) as a cofactor.

The enzyme catalyses a tRNA precursor + 2 CTP + ATP = a tRNA with a 3' CCA end + 3 diphosphate. It catalyses the reaction a tRNA with a 3' CCA end + 2 CTP + ATP = a tRNA with a 3' CCACCA end + 3 diphosphate. Catalyzes the addition and repair of the essential 3'-terminal CCA sequence in tRNAs without using a nucleic acid template. Adds these three nucleotides in the order of C, C, and A to the tRNA nucleotide-73, using CTP and ATP as substrates and producing inorganic pyrophosphate. tRNA 3'-terminal CCA addition is required both for tRNA processing and repair. Also involved in tRNA surveillance by mediating tandem CCA addition to generate a CCACCA at the 3' terminus of unstable tRNAs. While stable tRNAs receive only 3'-terminal CCA, unstable tRNAs are marked with CCACCA and rapidly degraded. The polypeptide is Multifunctional CCA protein (Alcanivorax borkumensis (strain ATCC 700651 / DSM 11573 / NCIMB 13689 / SK2)).